The following is a 236-amino-acid chain: CBS domain-containing protein CBSX1, chloroplastic (236 aa).

The transit peptide at 1–53 (MDAVLYSVPLSFTPLRASSSPSSPYLLLPRFLSVQPCHKFTFSRSFPSKSRIP) directs the protein to the chloroplast. The tract at residues 47–66 (PSKSRIPSASSAAGSTLMTN) is disordered. Ser-54 carries the N-acetylserine modification. 2 consecutive CBS domains span residues 81 to 142 (MTKK…GRTE) and 175 to 231 (MTPA…IKRS).

Its subcellular location is the plastid. The protein localises to the chloroplast. The polypeptide is CBS domain-containing protein CBSX1, chloroplastic (CBSX1) (Arabidopsis thaliana (Mouse-ear cress)).